The following is a 95-amino-acid chain: Co-chaperonin GroES (95 aa).

The protein belongs to the GroES chaperonin family. As to quaternary structure, heptamer of 7 subunits arranged in a ring. Interacts with the chaperonin GroEL.

It is found in the cytoplasm. Its function is as follows. Together with the chaperonin GroEL, plays an essential role in assisting protein folding. The GroEL-GroES system forms a nano-cage that allows encapsulation of the non-native substrate proteins and provides a physical environment optimized to promote and accelerate protein folding. GroES binds to the apical surface of the GroEL ring, thereby capping the opening of the GroEL channel. The polypeptide is Co-chaperonin GroES (Geobacter metallireducens (strain ATCC 53774 / DSM 7210 / GS-15)).